The chain runs to 238 residues: MGKKLLQQRAGRGGINFRSPSWRRVGPARYPNIEGDHKGKIIDILHNPGVTAPVVKVKLDNGLQFYIPAVQGVAVGQEISIGKNATISNGNIVEVGQLPEGTVICNVEKLKGDGGKFARAAGSYAVISGKAGNKVLIKLSSEKIVEVSQNARATVGIIAGGGFVEKPLLKAGNNYWKYRVRAVKWPVVRGVAMNAVSHPHGGGLHQSVSRPSTVSRNAPPGRKVGHIASRRTGRRGGA.

The interval 198-238 (HPHGGGLHQSVSRPSTVSRNAPPGRKVGHIASRRTGRRGGA) is disordered. Residues 206–216 (QSVSRPSTVSR) are compositionally biased toward polar residues. Basic residues predominate over residues 223–238 (KVGHIASRRTGRRGGA).

Belongs to the universal ribosomal protein uL2 family. As to quaternary structure, part of the 50S ribosomal subunit. Forms a bridge to the 30S subunit in the 70S ribosome.

One of the primary rRNA binding proteins. Required for association of the 30S and 50S subunits to form the 70S ribosome, for tRNA binding and peptide bond formation. It has been suggested to have peptidyltransferase activity; this is somewhat controversial. Makes several contacts with the 16S rRNA in the 70S ribosome. This Sulfolobus acidocaldarius (strain ATCC 33909 / DSM 639 / JCM 8929 / NBRC 15157 / NCIMB 11770) protein is Large ribosomal subunit protein uL2.